The following is a 353-amino-acid chain: tRNA U34 carboxymethyltransferase (353 aa).

Residues K101, W119, K124, G144, D166–S168, L207–E208, M227, Y231, and R346 contribute to the carboxy-S-adenosyl-L-methionine site.

The protein belongs to the class I-like SAM-binding methyltransferase superfamily. CmoB family. In terms of assembly, homotetramer.

It catalyses the reaction carboxy-S-adenosyl-L-methionine + 5-hydroxyuridine(34) in tRNA = 5-carboxymethoxyuridine(34) in tRNA + S-adenosyl-L-homocysteine + H(+). Its function is as follows. Catalyzes carboxymethyl transfer from carboxy-S-adenosyl-L-methionine (Cx-SAM) to 5-hydroxyuridine (ho5U) to form 5-carboxymethoxyuridine (cmo5U) at position 34 in tRNAs. This Psychrobacter sp. (strain PRwf-1) protein is tRNA U34 carboxymethyltransferase.